A 444-amino-acid chain; its full sequence is Tubulin beta-8 chain (444 aa).

The MREI motif signature appears at 1-4 (MREI). 6 residues coordinate GTP: glutamine 11, glutamate 69, serine 138, glycine 142, threonine 143, and glycine 144. Mg(2+) is bound at residue glutamate 69. Phosphoserine; by CDK1 is present on serine 172. Residues asparagine 204 and asparagine 226 each coordinate GTP. The disordered stretch occupies residues 423–444 (QQYQDATAEEEEDEEYAEEEVA). Over residues 429–444 (TAEEEEDEEYAEEEVA) the composition is skewed to acidic residues. Glutamate 436 is subject to 5-glutamyl polyglutamate.

It belongs to the tubulin family. Dimer of alpha and beta chains. A typical microtubule is a hollow water-filled tube with an outer diameter of 25 nm and an inner diameter of 15 nM. Alpha-beta heterodimers associate head-to-tail to form protofilaments running lengthwise along the microtubule wall with the beta-tubulin subunit facing the microtubule plus end conferring a structural polarity. Microtubules usually have 13 protofilaments but different protofilament numbers can be found in some organisms and specialized cells. Mg(2+) serves as cofactor. In terms of processing, some glutamate residues at the C-terminus are polyglycylated, resulting in polyglycine chains on the gamma-carboxyl group. Glycylation is mainly limited to tubulin incorporated into axonemes (cilia and flagella) whereas glutamylation is prevalent in neuronal cells, centrioles, axonemes, and the mitotic spindle. Both modifications can coexist on the same protein on adjacent residues, and lowering polyglycylation levels increases polyglutamylation, and reciprocally. Cilia and flagella glycylation is required for their stability and maintenance. Flagella glycylation controls sperm motility. Post-translationally, some glutamate residues at the C-terminus are polyglutamylated, resulting in polyglutamate chains on the gamma-carboxyl group. Polyglutamylation plays a key role in microtubule severing by spastin (SPAST). SPAST preferentially recognizes and acts on microtubules decorated with short polyglutamate tails: severing activity by SPAST increases as the number of glutamates per tubulin rises from one to eight, but decreases beyond this glutamylation threshold. Glutamylation is also involved in cilia motility. Phosphorylated on Ser-172 by CDK1 during the cell cycle, from metaphase to telophase, but not in interphase. This phosphorylation inhibits tubulin incorporation into microtubules.

Its subcellular location is the cytoplasm. The protein resides in the cytoskeleton. It is found in the spindle. Its function is as follows. Tubulin is the major constituent of microtubules, a cylinder consisting of laterally associated linear protofilaments composed of alpha- and beta-tubulin heterodimers. Microtubules grow by the addition of GTP-tubulin dimers to the microtubule end, where a stabilizing cap forms. Below the cap, tubulin dimers are in GDP-bound state, owing to GTPase activity of alpha-tubulin. Has a key role in meiotic spindle assembly and oocyte maturation. This chain is Tubulin beta-8 chain (TUBB8), found in Pan troglodytes (Chimpanzee).